The chain runs to 965 residues: Fibronectin-binding protein A (965 aa).

A signal peptide spans 1–36 (MKNNLRYGIRKHKLGAASVFLGTMIVIGMGQDKEAA). Residues 7–18 (YGIRKHKLGAAS) carry the YSIRK-G/S signaling motif motif. The interval 37–206 (ASEQKTTTVE…VTSKVTVEDE (170 aa)) is disordered. The tract at residues 37–514 (ASEQKTTTVE…SNKANGDGKY (478 aa)) is ligand-binding A region. Residues 39-55 (EQKTTTVEENGNSATDN) are compositionally biased toward polar residues. Low complexity predominate over residues 59 to 74 (ETQTTTTNVNTIDETQ). Positions 75–92 (SYSATATEQPSNATQVTT) are enriched in polar residues. Over residues 112–122 (TVKEEVVKEEA) the composition is skewed to basic and acidic residues. Residues 126–139 (VKETTQSQDNSGDQ) are compositionally biased toward polar residues. Basic and acidic residues predominate over residues 179-193 (DVAEAKEASDAKVET). The segment at 194–514 (GTDVTSKVTV…SNKANGDGKY (321 aa)) is fibrinogen/elastin/tropoelastin-binding. Positions 515 to 837 (GPIVDSNNFE…EGQQTIEEDT (323 aa)) are fibronectin-binding. The B-1 repeat unit spans residues 548–577 (ENQDNTPLDIDYHTAIDGEGGYVDGYIETI). A 2 X approximate tandem repeats region spans residues 548–607 (ENQDNTPLDIDYHTAIDGEGGYVDGYIETIEETDSSAIDIDYHTAVDSEAGHVGGYTESS). A B-2 repeat occupies 578 to 607 (EETDSSAIDIDYHTAVDSEAGHVGGYTESS). Disordered stretches follow at residues 598–625 (GHVGGYTESSEESNPIDFEESTHENSKH), 743–774 (LGYEGGQNSGNQSFEEDTEEDKPKYEQGGNII), 794–903 (IEED…GKVV), and 916–942 (VAPTKQKQAKKSELPETGGEESTNKGM). A D-1; truncated repeat occupies 748–770 (GQNSGNQSFEEDTEEDKPKYEQG). Residues 748–839 (GQNSGNQSFE…QQTIEEDTTP (92 aa)) form a 4 X approximate tandem repeats region. The D-2; truncated repeat unit spans residues 771–785 (GNIIDIDFDSVPQIH). One copy of the D-3 repeat lies at 786-824 (GFNKHNEIIEEDTNKDKPNYQFGGHNSVDFEEDTLPKVS). Positions 794–803 (IEEDTNKDKP) are enriched in basic and acidic residues. The stretch at 825–839 (GQNEGQQTIEEDTTP) is one D-4; truncated repeat. Over residues 839 to 885 (PPTPPTPEVPSEPGTPTPPTPEVPSEPGKPTPPTPEVPAEPGKPVPP) the composition is skewed to pro residues. 4 WR repeats span residues 840-853 (PTPPTPEVPSEPGT), 854-867 (PTPPTPEVPSEPGK), 868-881 (PTPPTPEVPAEPGK), and 882-895 (PVPPAKEEPKKPSK). Residues 840–895 (PTPPTPEVPSEPGTPTPPTPEVPSEPGKPTPPTPEVPAEPGKPVPPAKEEPKKPSK) are 4 X tandem repeats, Pro-rich (WR). Positions 929–933 (LPETG) match the LPXTG sorting signal motif. The residue at position 932 (T932) is a Pentaglycyl murein peptidoglycan amidated threonine. The propeptide at 933–965 (GGEESTNKGMLFGGLFSILGLALLRRNKKNHKA) is removed by sortase.

Its subcellular location is the secreted. The protein localises to the cell wall. In terms of biological role, promotes bacterial attachment to multiple substrates, such as fibronectin (Fn), fibrinogen (Fg), elastin peptides and tropoelastin. This confers to S.aureus the ability to invade endothelial cells. Promotes adherence to and aggregation of activated platelets. In Staphylococcus aureus (strain MRSA252), this protein is Fibronectin-binding protein A (fnbA).